A 672-amino-acid polypeptide reads, in one-letter code: Glycine--tRNA ligase beta subunit (672 aa).

The protein belongs to the class-II aminoacyl-tRNA synthetase family. Tetramer of two alpha and two beta subunits.

It localises to the cytoplasm. It carries out the reaction tRNA(Gly) + glycine + ATP = glycyl-tRNA(Gly) + AMP + diphosphate. The sequence is that of Glycine--tRNA ligase beta subunit from Thermotoga sp. (strain RQ2).